The primary structure comprises 995 residues: Epididymis-specific alpha-mannosidase (995 aa).

The first 21 residues, 1–21 (MGPHSWLPLFMQLALLGPQWA), serve as a signal peptide directing secretion. Zn(2+) is bound by residues histidine 36, aspartate 38, and aspartate 151. Aspartate 151 acts as the Nucleophile in catalysis. A glycan (N-linked (GlcNAc...) asparagine) is linked at asparagine 285. Zn(2+) is bound at residue histidine 411. 7 N-linked (GlcNAc...) asparagine glycosylation sites follow: asparagine 593, asparagine 625, asparagine 657, asparagine 733, asparagine 793, asparagine 875, and asparagine 977. The interval 956–977 (TEDGHHHRGSSRRPLPPLRGPN) is disordered.

The protein belongs to the glycosyl hydrolase 38 family. It depends on Zn(2+) as a cofactor. Processed into a 27 kDa fragment localized on the equatorial segment and the apical rim of the head of mature sperm. As to expression, specific to the caput and corpus of the epididymis.

Its subcellular location is the secreted. It carries out the reaction Hydrolysis of terminal, non-reducing alpha-D-mannose residues in alpha-D-mannosides.. In terms of biological role, can digest both p-nitro-phenyl-alpha-D-mannoside and high mannose oligosaccharide (Man(8)-GlcNAc(2)). May be involved in sperm maturation. Has a possible role in specific sperm-egg interaction since sperm surface mannosidase acts like a receptor for mannose-containing oligosaccharides located on the zona pellucida. In Sus scrofa (Pig), this protein is Epididymis-specific alpha-mannosidase (MAN2B2).